The primary structure comprises 363 residues: NAD(P)H-quinone oxidoreductase subunit 1, chloroplastic (363 aa).

The next 6 helical transmembrane spans lie at 30-50 (LVPI…IVWL), 98-118 (FSIG…VIPF), 127-147 (LSIG…GLLM), 248-268 (YSGI…LVSS), 300-320 (VFGT…FLFI), and 336-356 (LLNL…LLTT).

It belongs to the complex I subunit 1 family. In terms of assembly, NDH is composed of at least 16 different subunits, 5 of which are encoded in the nucleus.

The protein resides in the plastid. It localises to the chloroplast thylakoid membrane. The catalysed reaction is a plastoquinone + NADH + (n+1) H(+)(in) = a plastoquinol + NAD(+) + n H(+)(out). It catalyses the reaction a plastoquinone + NADPH + (n+1) H(+)(in) = a plastoquinol + NADP(+) + n H(+)(out). NDH shuttles electrons from NAD(P)H:plastoquinone, via FMN and iron-sulfur (Fe-S) centers, to quinones in the photosynthetic chain and possibly in a chloroplast respiratory chain. The immediate electron acceptor for the enzyme in this species is believed to be plastoquinone. Couples the redox reaction to proton translocation, and thus conserves the redox energy in a proton gradient. The sequence is that of NAD(P)H-quinone oxidoreductase subunit 1, chloroplastic from Drimys granadensis.